The sequence spans 141 residues: Organic hydroperoxide resistance protein OhrA (141 aa).

The protein belongs to the OsmC/Ohr family.

Involved in organic hydroperoxide resistance. This is Organic hydroperoxide resistance protein OhrA (ohrA) from Bacillus subtilis (strain 168).